The chain runs to 346 residues: Putative transmembrane protein ORF346 (346 aa).

6 consecutive transmembrane segments (helical) span residues 67–87 (LPII…CIVY), 104–124 (IINP…VGLT), 134–154 (PPYL…SGIY), 156–176 (AIGD…GLFI), 181–201 (IILY…LCLS), and 219–241 (YPFS…LGSY). The segment at 294–346 (SEYPHSENGSGGSGGSGSGSGSGGSGSGGNSGSGGSGSGSSGSGGNSGSGNNG) is disordered. Over residues 302–346 (GSGGSGGSGSGSGSGGSGSGGNSGSGGSGSGSSGSGGNSGSGNNG) the composition is skewed to gly residues.

It is found in the host membrane. This Acidianus bottle-shaped virus (isolate Italy/Pozzuoli) (ABV) protein is Putative transmembrane protein ORF346.